The following is a 64-amino-acid chain: DNA gyrase inhibitor YacG (64 aa).

Positions 9, 12, 28, and 32 each coordinate Zn(2+). Positions 42 to 64 (DEENAIPGAPDMSDSDGWSEEQY) are disordered. Positions 54 to 64 (SDSDGWSEEQY) are enriched in acidic residues.

This sequence belongs to the DNA gyrase inhibitor YacG family. As to quaternary structure, interacts with GyrB. Requires Zn(2+) as cofactor.

Functionally, inhibits all the catalytic activities of DNA gyrase by preventing its interaction with DNA. Acts by binding directly to the C-terminal domain of GyrB, which probably disrupts DNA binding by the gyrase. The protein is DNA gyrase inhibitor YacG of Vibrio vulnificus (strain YJ016).